Consider the following 381-residue polypeptide: Dual-specificity RNA methyltransferase RlmN (381 aa).

E95 (proton acceptor) is an active-site residue. A Radical SAM core domain is found at 101 to 339; sequence DGRRGTLCVS…MTTVRTTRGD (239 aa). C108 and C345 form a disulfide bridge. [4Fe-4S] cluster contacts are provided by C115, C119, and C122. S-adenosyl-L-methionine is bound by residues 169–170, S201, 223–225, and N302; these read GE and SLH. C345 functions as the S-methylcysteine intermediate in the catalytic mechanism.

It belongs to the radical SAM superfamily. RlmN family. [4Fe-4S] cluster is required as a cofactor.

It localises to the cytoplasm. It carries out the reaction adenosine(2503) in 23S rRNA + 2 reduced [2Fe-2S]-[ferredoxin] + 2 S-adenosyl-L-methionine = 2-methyladenosine(2503) in 23S rRNA + 5'-deoxyadenosine + L-methionine + 2 oxidized [2Fe-2S]-[ferredoxin] + S-adenosyl-L-homocysteine. The catalysed reaction is adenosine(37) in tRNA + 2 reduced [2Fe-2S]-[ferredoxin] + 2 S-adenosyl-L-methionine = 2-methyladenosine(37) in tRNA + 5'-deoxyadenosine + L-methionine + 2 oxidized [2Fe-2S]-[ferredoxin] + S-adenosyl-L-homocysteine. Specifically methylates position 2 of adenine 2503 in 23S rRNA and position 2 of adenine 37 in tRNAs. m2A2503 modification seems to play a crucial role in the proofreading step occurring at the peptidyl transferase center and thus would serve to optimize ribosomal fidelity. In Alcanivorax borkumensis (strain ATCC 700651 / DSM 11573 / NCIMB 13689 / SK2), this protein is Dual-specificity RNA methyltransferase RlmN.